The primary structure comprises 310 residues: Ribosomal RNA small subunit methyltransferase H (310 aa).

S-adenosyl-L-methionine-binding positions include 32–34 (GGH), Asp-52, Ala-83, Asp-100, and Gln-107.

Belongs to the methyltransferase superfamily. RsmH family.

Its subcellular location is the cytoplasm. It catalyses the reaction cytidine(1402) in 16S rRNA + S-adenosyl-L-methionine = N(4)-methylcytidine(1402) in 16S rRNA + S-adenosyl-L-homocysteine + H(+). Specifically methylates the N4 position of cytidine in position 1402 (C1402) of 16S rRNA. In Geobacillus sp. (strain WCH70), this protein is Ribosomal RNA small subunit methyltransferase H.